The sequence spans 314 residues: tRNA pseudouridine synthase B (314 aa).

Histidine 43 serves as a coordination point for substrate. Aspartate 48 acts as the Nucleophile in catalysis. Substrate-binding residues include tyrosine 76, tyrosine 179, and leucine 200.

It belongs to the pseudouridine synthase TruB family. Type 1 subfamily.

The catalysed reaction is uridine(55) in tRNA = pseudouridine(55) in tRNA. Functionally, responsible for synthesis of pseudouridine from uracil-55 in the psi GC loop of transfer RNAs. The polypeptide is tRNA pseudouridine synthase B (Shigella flexneri).